Consider the following 262-residue polypeptide: 7alpha-hydroxysteroid dehydrogenase (262 aa).

Residues 13–18 (SSTRGI), arginine 38, 63–64 (NA), and asparagine 90 contribute to the NADP(+) site. Residues threonine 145 and tyrosine 158 each contribute to the taurochenodeoxycholate site. NADP(+) contacts are provided by residues tyrosine 158, lysine 162, and 191–195 (IGTRA). Tyrosine 158 serves as the catalytic Proton acceptor.

It belongs to the short-chain dehydrogenases/reductases (SDR) family. In terms of assembly, homotetramer. A dynamic equilibrium between dimers and tetramers seems to exist.

It carries out the reaction cholate + NADP(+) = 3alpha,12alpha-dihydroxy-7-oxo-5beta-cholanate + NADPH + H(+). The catalysed reaction is chenodeoxycholate + NADP(+) = 7-oxolithocholate + NADPH + H(+). The enzyme catalyses 3alpha,7alpha-dihydroxy-12-oxo-5beta-cholanate + NADP(+) = 7,12-dioxo-lithocholate + NADPH + H(+). It catalyses the reaction 7alpha-hydroxy-3,12-dioxo-5beta-cholanate + NADP(+) = dehydrocholate + NADPH + H(+). It carries out the reaction glycochenodeoxycholate + NADP(+) = 7-oxoglycolithocholate + NADPH + H(+). The catalysed reaction is taurochenodeoxycholate + NADP(+) = 7-oxotaurolithocholate + NADPH + H(+). Activated by metal ions such as Mg(2+), Na(+) and K(+). Functionally, 7alpha-hydroxysteroid dehydrogenase that catalyzes the NADP(+)-dependent oxidation of the 7alpha-hydroxy group of 7alpha-hydroxysteroids, such as cholate, chenodeoxycholate, glycochenodeoxycholate and taurochenodeoxycholate, to the corresponding 7-oxosteroids. Is also able to catalyze the reverse reduction reactions. Together with 7beta-HSDH encoded in the adjacent gene, is likely involved in the epimerization of the hydroxy group at C-7 of primary bile acids through 7-keto bile acid intermediates. The protein is 7alpha-hydroxysteroid dehydrogenase of Clostridium sardiniense (Clostridium absonum).